Reading from the N-terminus, the 117-residue chain is Ribosome-binding factor A (117 aa).

Belongs to the RbfA family. Monomer. Binds 30S ribosomal subunits, but not 50S ribosomal subunits or 70S ribosomes.

Its subcellular location is the cytoplasm. Functionally, one of several proteins that assist in the late maturation steps of the functional core of the 30S ribosomal subunit. Associates with free 30S ribosomal subunits (but not with 30S subunits that are part of 70S ribosomes or polysomes). Required for efficient processing of 16S rRNA. May interact with the 5'-terminal helix region of 16S rRNA. The sequence is that of Ribosome-binding factor A from Leptospira interrogans serogroup Icterohaemorrhagiae serovar Lai (strain 56601).